Reading from the N-terminus, the 400-residue chain is Formate-dependent phosphoribosylglycinamide formyltransferase (400 aa).

N(1)-(5-phospho-beta-D-ribosyl)glycinamide is bound by residues 22–23 and E82; that span reads EL. ATP is bound by residues R115, K157, 162–167, 197–200, and E205; these read SSGKGQ and EGFI. Residues 120-315 form the ATP-grasp domain; sequence RLAAETLGVP…EFELHARAIL (196 aa). E274 and E286 together coordinate Mg(2+). N(1)-(5-phospho-beta-D-ribosyl)glycinamide-binding positions include D293, K362, and 369 to 370; that span reads RR.

It belongs to the PurK/PurT family. In terms of assembly, homodimer.

It carries out the reaction N(1)-(5-phospho-beta-D-ribosyl)glycinamide + formate + ATP = N(2)-formyl-N(1)-(5-phospho-beta-D-ribosyl)glycinamide + ADP + phosphate + H(+). The protein operates within purine metabolism; IMP biosynthesis via de novo pathway; N(2)-formyl-N(1)-(5-phospho-D-ribosyl)glycinamide from N(1)-(5-phospho-D-ribosyl)glycinamide (formate route): step 1/1. Functionally, involved in the de novo purine biosynthesis. Catalyzes the transfer of formate to 5-phospho-ribosyl-glycinamide (GAR), producing 5-phospho-ribosyl-N-formylglycinamide (FGAR). Formate is provided by PurU via hydrolysis of 10-formyl-tetrahydrofolate. The sequence is that of Formate-dependent phosphoribosylglycinamide formyltransferase from Variovorax paradoxus (strain S110).